Consider the following 355-residue polypeptide: UDP-N-acetylglucosamine--N-acetylmuramyl-(pentapeptide) pyrophosphoryl-undecaprenol N-acetylglucosamine transferase (355 aa).

UDP-N-acetyl-alpha-D-glucosamine-binding positions include 14–16 (TGG), asparagine 126, arginine 162, serine 190, isoleucine 245, 264–269 (ALTVCE), and glutamine 289.

It belongs to the glycosyltransferase 28 family. MurG subfamily.

The protein localises to the cell inner membrane. It carries out the reaction di-trans,octa-cis-undecaprenyl diphospho-N-acetyl-alpha-D-muramoyl-L-alanyl-D-glutamyl-meso-2,6-diaminopimeloyl-D-alanyl-D-alanine + UDP-N-acetyl-alpha-D-glucosamine = di-trans,octa-cis-undecaprenyl diphospho-[N-acetyl-alpha-D-glucosaminyl-(1-&gt;4)]-N-acetyl-alpha-D-muramoyl-L-alanyl-D-glutamyl-meso-2,6-diaminopimeloyl-D-alanyl-D-alanine + UDP + H(+). Its pathway is cell wall biogenesis; peptidoglycan biosynthesis. Functionally, cell wall formation. Catalyzes the transfer of a GlcNAc subunit on undecaprenyl-pyrophosphoryl-MurNAc-pentapeptide (lipid intermediate I) to form undecaprenyl-pyrophosphoryl-MurNAc-(pentapeptide)GlcNAc (lipid intermediate II). The polypeptide is UDP-N-acetylglucosamine--N-acetylmuramyl-(pentapeptide) pyrophosphoryl-undecaprenol N-acetylglucosamine transferase (Mannheimia succiniciproducens (strain KCTC 0769BP / MBEL55E)).